Here is a 209-residue protein sequence, read N- to C-terminus: Homeobox protein ceh-2 (209 aa).

Residues 1 to 14 are compositionally biased toward basic and acidic residues; the sequence is MTLKFSVERLVDSE. Disordered regions lie at residues 1-46 and 181-209; these read MTLK…KSGK and HKRVRLEGSDPNAPMSNDEDDEDDKKSVS. A compositionally biased stretch (acidic residues) spans 15-24; that stretch reads KESEEADVEE. A DNA-binding region (homeobox) is located at residues 126–185; that stretch reads NKRIRTAFSASQLIQLEKAFEGNHYVVGNERKQLAAKLSLTETQVKVWFQNRRTKHKRVR.

It belongs to the EMX homeobox family. In the anterior pharynx, expressed in the I3 interneuron, the NSM and M3 motor neuron pairs, the three m2 muscle cells and the three e2 epithelial cells (at protein level).

It is found in the nucleus. Required for activity of the M3 pharyngeal motor neuron. The polypeptide is Homeobox protein ceh-2 (Caenorhabditis elegans).